The chain runs to 603 residues: Iron-sulfur clusters transporter ATM1, mitochondrial (603 aa).

A helical transmembrane segment spans residues 20 to 41; sequence VLLAVGLLVGGKVLNVQVPFFF. In terms of domain architecture, ABC transmembrane type-1 spans 20 to 310; sequence VLLAVGLLVG…LGSVYRELRQ (291 aa). Over 42–64 the chain is Mitochondrial intermembrane; the sequence is REIVDSLNVDIAATGGTVATVAG. The chain crosses the membrane as a helical span at residues 65–88; it reads TMIFAYGASRIGAVVSQELRNAVF. Topologically, residues 89 to 137 are mitochondrial matrix; that stretch reads SSVAQKAIRRVATRTFGHLLNLDLNFHLSKQTGGLTRAIDRGTKGISFL. Residues 138-161 form a helical membrane-spanning segment; sequence LTSMVFHIVPTALEISMVCGILTY. A topological domain (mitochondrial intermembrane) is located at residue Gln162. The helical transmembrane segment at 163–183 threads the bilayer; it reads FGWEFAAVTALTMSAYTAFTI. Topologically, residues 184 to 249 are mitochondrial matrix; it reads WTTAWRTKFR…SSIKVATSLA (66 aa). Glutathione contacts are provided by residues 189–193 and 252–255; these read RTKFR and NSGQ. A helical transmembrane segment spans residues 250–268; it reads FLNSGQNIIFSSALTIMMW. Residues 269–283 are Mitochondrial intermembrane-facing; sequence LGAKGIVAGSLSVGD. Residues 284–305 traverse the membrane as a helical segment; sequence LVLINQLVFQLSVPLNFLGSVY. Position 302 (Gly302) interacts with glutathione. The Mitochondrial matrix portion of the chain corresponds to 306–603; the sequence is RELRQSLLDM…SEREAPVPVK (298 aa). The region spanning 345-581 is the ABC transporter domain; the sequence is IRFDNVSFGY…NGLYTELWMA (237 aa). ATP-binding positions include Tyr354 and 378–389; that span reads GPSGCGKSTLLR.

This sequence belongs to the ABC transporter superfamily. ABCB family. Heavy Metal importer (TC 3.A.1.210) subfamily. In terms of assembly, homodimer.

It localises to the mitochondrion inner membrane. In terms of biological role, performs an essential function in the generation of cytoplasmic iron-sulfur proteins by mediating the ATP-dependent export of Fe/S cluster precursors synthesized by NFS1 and other mitochondrial proteins. Hydrolyzes ATP. Binds glutathione and may function by transporting a glutathione-conjugated iron-sulfur compound. This Chaetomium globosum (strain ATCC 6205 / CBS 148.51 / DSM 1962 / NBRC 6347 / NRRL 1970) (Soil fungus) protein is Iron-sulfur clusters transporter ATM1, mitochondrial.